Here is a 1018-residue protein sequence, read N- to C-terminus: Probable inorganic carbon transporter subunit DabA 2 (1018 aa).

Zn(2+) is bound by residues C489, D491, H674, and C689.

The protein belongs to the inorganic carbon transporter (TC 9.A.2) DabA family. As to quaternary structure, forms a complex with DabB. Requires Zn(2+) as cofactor.

Its subcellular location is the cell inner membrane. Part of an energy-coupled inorganic carbon pump. This chain is Probable inorganic carbon transporter subunit DabA 2, found in Sorangium cellulosum (strain So ce56) (Polyangium cellulosum (strain So ce56)).